A 360-amino-acid polypeptide reads, in one-letter code: Alpha-ketoglutarate dependent kainoid synthase (360 aa).

In terms of domain architecture, Fe2OG dioxygenase spans 200-310; the sequence is MFFSNRIYPE…RASLISFYEP (111 aa). Histidine 225, aspartate 227, and histidine 286 together coordinate Fe cation. Arginine 301 serves as a coordination point for 2-oxoglutarate.

Belongs to the iron/ascorbate-dependent oxidoreductase family. Fe(2+) serves as cofactor.

The catalysed reaction is prekainate + 2-oxoglutarate + O2 = kainate + succinate + CO2 + H2O. It catalyses the reaction prekainate + 2-oxoglutarate + O2 + H(+) = kainate lactone + succinate + CO2 + H2O. It participates in secondary metabolite biosynthesis. Its activity is regulated as follows. Inhibited by the iron chelator EDTA. Its function is as follows. Iron/ascorbate-dependent oxidoreductase: part of the gene cluster that mediates the biosynthesis of kainic acid (KA) and derivatives, natural products with neurochemical activity acting as ionotropic glutamate receptor (iGluR) agonists, thus being neurotoxins. Catalyzes the conversion of prekainic acid to kainic acid and kainic acid lactone. This is Alpha-ketoglutarate dependent kainoid synthase from Digenea simplex (Marine red alga).